The primary structure comprises 139 residues: Large ribosomal subunit protein eL32 (139 aa).

This sequence belongs to the eukaryotic ribosomal protein eL32 family.

This chain is Large ribosomal subunit protein eL32 (RPL32), found in Encephalitozoon cuniculi (strain GB-M1) (Microsporidian parasite).